Consider the following 404-residue polypeptide: D-galactonate dehydratase family member Ent638_1932 (404 aa).

2 residues coordinate substrate: N37 and H122. Residue Y159 is the Proton donor/acceptor of the active site. D212 is a binding site for Mg(2+). Residue H214 is the Proton donor/acceptor of the active site. Residues E238 and E264 each coordinate Mg(2+). Substrate contacts are provided by E264, R285, H314, D318, and E341.

The protein belongs to the mandelate racemase/muconate lactonizing enzyme family. GalD subfamily. It depends on Mg(2+) as a cofactor.

It carries out the reaction D-mannonate = 2-dehydro-3-deoxy-D-gluconate + H2O. In terms of biological role, has low D-mannonate dehydratase activity (in vitro), suggesting that this is not a physiological substrate and that it has no significant role in D-mannonate degradation in vivo. Has no detectable activity with a panel of 70 other acid sugars (in vitro). This Enterobacter sp. (strain 638) protein is D-galactonate dehydratase family member Ent638_1932.